The sequence spans 346 residues: UDP-3-O-acylglucosamine N-acyltransferase (346 aa).

Catalysis depends on histidine 240, which acts as the Proton acceptor.

This sequence belongs to the transferase hexapeptide repeat family. LpxD subfamily. As to quaternary structure, homotrimer.

It catalyses the reaction a UDP-3-O-[(3R)-3-hydroxyacyl]-alpha-D-glucosamine + a (3R)-hydroxyacyl-[ACP] = a UDP-2-N,3-O-bis[(3R)-3-hydroxyacyl]-alpha-D-glucosamine + holo-[ACP] + H(+). It functions in the pathway bacterial outer membrane biogenesis; LPS lipid A biosynthesis. Catalyzes the N-acylation of UDP-3-O-acylglucosamine using 3-hydroxyacyl-ACP as the acyl donor. Is involved in the biosynthesis of lipid A, a phosphorylated glycolipid that anchors the lipopolysaccharide to the outer membrane of the cell. This chain is UDP-3-O-acylglucosamine N-acyltransferase, found in Bacteroides fragilis (strain ATCC 25285 / DSM 2151 / CCUG 4856 / JCM 11019 / LMG 10263 / NCTC 9343 / Onslow / VPI 2553 / EN-2).